Here is a 354-residue protein sequence, read N- to C-terminus: Ion-translocating oxidoreductase complex subunit D (354 aa).

4 helical membrane passes run 19-39 (IMLL…YYFG), 40-60 (FGVL…EFLV), 77-99 (AAVT…LSFF), and 119-139 (IFNP…ILMT). The residue at position 187 (threonine 187) is an FMN phosphoryl threonine. 5 consecutive transmembrane segments (helical) span residues 221–241 (WISI…FNVI), 245–265 (IPVS…YFFK), 268–288 (MYYP…FFIA), 295–315 (SITK…IWLI), and 319–339 (GNYP…VPLI).

It belongs to the NqrB/RnfD family. As to quaternary structure, the complex is composed of six subunits: RnfA, RnfB, RnfC, RnfD, RnfE and RnfG. FMN is required as a cofactor.

The protein localises to the cell inner membrane. Its function is as follows. Part of a membrane-bound complex that couples electron transfer with translocation of ions across the membrane. The protein is Ion-translocating oxidoreductase complex subunit D of Buchnera aphidicola subsp. Baizongia pistaciae (strain Bp).